The primary structure comprises 425 residues: SrfA-induced gene G protein (425 aa).

N-linked (GlcNAc...) asparagine glycosylation is found at asparagine 25, asparagine 28, and asparagine 36. 3 coiled-coil regions span residues 41 to 91, 172 to 208, and 292 to 340; these read RDSE…RIRN, HEKQ…MKRT, and KFGQ…NYNI. A helical membrane pass occupies residues 91-113; it reads NVFKVLITILVGSIIYGTYTNQF. Positions 393–413 are disordered; it reads KKPHADSNGHPKPYPHHHLLN.

Its subcellular location is the membrane. This chain is SrfA-induced gene G protein (sigG), found in Dictyostelium discoideum (Social amoeba).